The chain runs to 815 residues: DNA gyrase subunit B (815 aa).

The segment at 1–21 (MEKTPATGSAVAPPPVEYGTD) is disordered. The 116-residue stretch at 430–545 (SELYIVEGDS…AISTSRSRRS (116 aa)) folds into the Toprim domain. Mg(2+)-binding residues include E436, D509, and D511.

It belongs to the type II topoisomerase GyrB family. As to quaternary structure, heterotetramer, composed of two GyrA and two GyrB chains. In the heterotetramer, GyrA contains the active site tyrosine that forms a transient covalent intermediate with DNA, while GyrB binds cofactors and catalyzes ATP hydrolysis. Mg(2+) serves as cofactor. Mn(2+) is required as a cofactor. Requires Ca(2+) as cofactor.

The protein localises to the cytoplasm. It catalyses the reaction ATP-dependent breakage, passage and rejoining of double-stranded DNA.. A type II topoisomerase that negatively supercoils closed circular double-stranded (ds) DNA in an ATP-dependent manner to modulate DNA topology and maintain chromosomes in an underwound state. Negative supercoiling favors strand separation, and DNA replication, transcription, recombination and repair, all of which involve strand separation. Also able to catalyze the interconversion of other topological isomers of dsDNA rings, including catenanes and knotted rings. Type II topoisomerases break and join 2 DNA strands simultaneously in an ATP-dependent manner. The sequence is that of DNA gyrase subunit B from Myxococcus xanthus.